The following is a 205-amino-acid chain: Holliday junction branch migration complex subunit RuvA (205 aa).

The domain I stretch occupies residues 1–64; that stretch reads MIGRLRGIVL…EDAQLLYGFN (64 aa). Residues 65-143 are domain II; that stretch reads DKQERALFRE…GLNGDLFNQS (79 aa). Positions 144 to 156 are flexible linker; sequence SDINLPATAKQTT. The segment at 157–205 is domain III; sequence SDADSEAEAAAALVSLGYKPQEASRMVSKIAKPGADCETLIREALRAVL.

Belongs to the RuvA family. Homotetramer. Forms an RuvA(8)-RuvB(12)-Holliday junction (HJ) complex. HJ DNA is sandwiched between 2 RuvA tetramers; dsDNA enters through RuvA and exits via RuvB. An RuvB hexamer assembles on each DNA strand where it exits the tetramer. Each RuvB hexamer is contacted by two RuvA subunits (via domain III) on 2 adjacent RuvB subunits; this complex drives branch migration. In the full resolvosome a probable DNA-RuvA(4)-RuvB(12)-RuvC(2) complex forms which resolves the HJ.

Its subcellular location is the cytoplasm. Its function is as follows. The RuvA-RuvB-RuvC complex processes Holliday junction (HJ) DNA during genetic recombination and DNA repair, while the RuvA-RuvB complex plays an important role in the rescue of blocked DNA replication forks via replication fork reversal (RFR). RuvA specifically binds to HJ cruciform DNA, conferring on it an open structure. The RuvB hexamer acts as an ATP-dependent pump, pulling dsDNA into and through the RuvAB complex. HJ branch migration allows RuvC to scan DNA until it finds its consensus sequence, where it cleaves and resolves the cruciform DNA. This Photorhabdus laumondii subsp. laumondii (strain DSM 15139 / CIP 105565 / TT01) (Photorhabdus luminescens subsp. laumondii) protein is Holliday junction branch migration complex subunit RuvA.